A 451-amino-acid chain; its full sequence is Phosphoglucosamine mutase (451 aa).

Serine 101 (phosphoserine intermediate) is an active-site residue. Residues serine 101, aspartate 240, aspartate 242, and aspartate 244 each coordinate Mg(2+). Serine 101 bears the Phosphoserine mark.

Belongs to the phosphohexose mutase family. Mg(2+) is required as a cofactor. Post-translationally, activated by phosphorylation.

It carries out the reaction alpha-D-glucosamine 1-phosphate = D-glucosamine 6-phosphate. In terms of biological role, catalyzes the conversion of glucosamine-6-phosphate to glucosamine-1-phosphate. This chain is Phosphoglucosamine mutase, found in Nitrosococcus oceani (strain ATCC 19707 / BCRC 17464 / JCM 30415 / NCIMB 11848 / C-107).